A 322-amino-acid chain; its full sequence is Lipoyl synthase 2 (322 aa).

The disordered stretch occupies residues 1–36 (MKVILDLLNNDPRTTQRTERPRHPEKANRPDTPMES). The segment covering 14–34 (TTQRTERPRHPEKANRPDTPM) has biased composition (basic and acidic residues). 7 residues coordinate [4Fe-4S] cluster: cysteine 67, cysteine 72, cysteine 78, cysteine 93, cysteine 97, cysteine 100, and serine 306. One can recognise a Radical SAM core domain in the interval 79–295 (WAKKHATFMI…EKTAYAKGFL (217 aa)).

The protein belongs to the radical SAM superfamily. Lipoyl synthase family. Requires [4Fe-4S] cluster as cofactor.

The protein resides in the cytoplasm. It catalyses the reaction [[Fe-S] cluster scaffold protein carrying a second [4Fe-4S](2+) cluster] + N(6)-octanoyl-L-lysyl-[protein] + 2 oxidized [2Fe-2S]-[ferredoxin] + 2 S-adenosyl-L-methionine + 4 H(+) = [[Fe-S] cluster scaffold protein] + N(6)-[(R)-dihydrolipoyl]-L-lysyl-[protein] + 4 Fe(3+) + 2 hydrogen sulfide + 2 5'-deoxyadenosine + 2 L-methionine + 2 reduced [2Fe-2S]-[ferredoxin]. The protein operates within protein modification; protein lipoylation via endogenous pathway; protein N(6)-(lipoyl)lysine from octanoyl-[acyl-carrier-protein]: step 2/2. Its function is as follows. Catalyzes the radical-mediated insertion of two sulfur atoms into the C-6 and C-8 positions of the octanoyl moiety bound to the lipoyl domains of lipoate-dependent enzymes, thereby converting the octanoylated domains into lipoylated derivatives. The chain is Lipoyl synthase 2 from Bradyrhizobium diazoefficiens (strain JCM 10833 / BCRC 13528 / IAM 13628 / NBRC 14792 / USDA 110).